The sequence spans 152 residues: Deoxyuridine 5'-triphosphate nucleotidohydrolase (152 aa).

Substrate-binding positions include 71–73 (RSG), Asn-84, 88–90 (LID), and Met-98.

The protein belongs to the dUTPase family. Requires Mg(2+) as cofactor.

The catalysed reaction is dUTP + H2O = dUMP + diphosphate + H(+). It functions in the pathway pyrimidine metabolism; dUMP biosynthesis; dUMP from dCTP (dUTP route): step 2/2. This enzyme is involved in nucleotide metabolism: it produces dUMP, the immediate precursor of thymidine nucleotides and it decreases the intracellular concentration of dUTP so that uracil cannot be incorporated into DNA. This Cronobacter sakazakii (strain ATCC BAA-894) (Enterobacter sakazakii) protein is Deoxyuridine 5'-triphosphate nucleotidohydrolase.